The chain runs to 458 residues: Tyrosine phenol-lyase (458 aa).

At Lys-258 the chain carries N6-(pyridoxal phosphate)lysine.

Belongs to the beta-eliminating lyase family. Homotetramer. Requires pyridoxal 5'-phosphate as cofactor.

The enzyme catalyses L-tyrosine + H2O = phenol + pyruvate + NH4(+). The polypeptide is Tyrosine phenol-lyase (tpl) (Symbiobacterium thermophilum (strain DSM 24528 / JCM 14929 / IAM 14863 / T)).